Consider the following 708-residue polypeptide: Leukotoxin translocation ATP-binding protein LktB (708 aa).

A Peptidase C39 domain is found at 1–126 (MEANHQRNDL…ACYQGQLILV (126 aa)). Residues 155–437 (FLETLIVSIF…LAQLWQDFQQ (283 aa)) form the ABC transmembrane type-1 domain. Transmembrane regions (helical) follow at residues 159 to 179 (LIVSIFLQIFALITPLFFQVV), 192 to 212 (LNIITVALAIVIIFEIVLSGL), 270 to 290 (ALTSVLDLLFSFIFFAVMWYY), 296 to 316 (LVILGSLPCYILWSIFISPIL), and 389 to 409 (VMVINLWLGAHLVISGDLSIG). The ABC transporter domain occupies 469 to 704 (IAFKNIRFRY…SNGLYSYLHQ (236 aa)). Residue 503–510 (GRSGSGKS) coordinates ATP.

Belongs to the ABC transporter superfamily. Protein-1 exporter (TC 3.A.1.109) family. Homodimer.

The protein localises to the cell inner membrane. The catalysed reaction is ATP + H2O + proteinSide 1 = ADP + phosphate + proteinSide 2.. Its function is as follows. Part of the ABC transporter complex LktBD involved in leukotoxin export. Transmembrane domains (TMD) form a pore in the inner membrane and the ATP-binding domain (NBD) is responsible for energy generation. The polypeptide is Leukotoxin translocation ATP-binding protein LktB (lktB) (Mannheimia glucosida).